The primary structure comprises 208 residues: MRGGEELDGFEGEASSTSMISGASSPYQPTTEPVSQRRGLAGLRCDPDYLRGALGRLKVAQVILALIAFICIETIMECSPCEGLYFFEFVSCSAFVVTGVLLILFSLNLHMRIPQINWNLTDLVNTGLSTFFFFIASIVLAALNHKTGAEIAAVIFGFLATAAYAVSTFLAMQKWRVSVRQQSTNDYIRARTESRDVDSRPEIQRLDT.

The span at 1–11 shows a compositional bias: acidic residues; the sequence is MRGGEELDGFE. The disordered stretch occupies residues 1–38; that stretch reads MRGGEELDGFEGEASSTSMISGASSPYQPTTEPVSQRR. Residues 15-25 show a composition bias toward low complexity; the sequence is SSTSMISGASS. An MARVEL domain is found at 49–176; sequence YLRGALGRLK…STFLAMQKWR (128 aa). Helical transmembrane passes span 59–79, 85–105, 123–143, and 151–171; these read VAQVILALIAFICIETIMECS, YFFEFVSCSAFVVTGVLLILF, LVNTGLSTFFFFIASIVLAAL, and IAAVIFGFLATAAYAVSTFLA. A Phosphoserine modification is found at Ser194.

Belongs to the chemokine-like factor family. In terms of assembly, interacts with PD1L1 and CMTM6.

The protein localises to the membrane. In terms of biological role, acts as a backup for CMTM6 to regulate plasma membrane expression of PD-L1/CD274, an immune inhibitory ligand critical for immune tolerance to self and antitumor immunity. May protect PD-L1/CD274 from being polyubiquitinated and targeted for degradation. This is CKLF-like MARVEL transmembrane domain-containing protein 4 from Mus musculus (Mouse).